Consider the following 297-residue polypeptide: Large ribosomal subunit protein uL15m (297 aa).

The transit peptide at 1-22 (MAGPVRGAAGPWALDLLRALPR) directs the protein to the mitochondrion. The interval 27–68 (NLRPNPGSRKPERRRRGQRRGRKCGRGHKGERQRGTRPRLGF) is disordered. The span at 37–53 (PERRRRGQRRGRKCGRG) shows a compositional bias: basic residues.

It belongs to the universal ribosomal protein uL15 family. Component of the mitochondrial ribosome large subunit (39S) which comprises a 16S rRNA and about 50 distinct proteins.

The protein localises to the mitochondrion. This is Large ribosomal subunit protein uL15m (MRPL15) from Bos taurus (Bovine).